The following is a 653-amino-acid chain: MRAGRGATPARELFRDAAFPAADSSLFCDLSTPLAQFREDITWRRPQEICAMPRLFPDDPQEGQVKQGLLGDCWFLCACAALQKSRHLLEQVIPPGQPSWADQEYQGSFTCRIWQFGRWVEVTTDDRLPCLAGRLCFSRCQREDVFWLPLLEKVYAKVHGSYEHLWAGQVADALVDLTGGLAERWSLKGVAGSGGQQDRLGRWEHRTCRQLLRLKDQSLISCSVLSPRAGARELGEFHAFIVSDLRELQDQAGQSILLLRIQNPWGRRCWQGLWREGGEGWSQVDAAVTSELLSQLQEGEFWVEEEEFLREFDEITIGYPITEAGHLQSLYTEKLLCHTRALPGAWVKGQSAGGCRNNSGFPSNPKFWLRVSEPSEVYIAVLQRSRLRAVDWAGRARALVGDSHTSWSPASIPGKHYQAVGLHLWKVEKRRVNLPRVLSTPPVAGTACHAYDREVHLRCELSPGYYLAVPSTFLKDAPGEFLLRVFSTGRVSLSAIRAVAKNASPRAALPAGEWGTVQLRGSWRAGQTAGGSRNFASYPTNPCFPFSVPEGPGPRCVRITLHQHCQPRDTEFHPIGFHIFQVPEGGRSQDAPPLLLQEPLLSCVPHRYAQEVSQLCLLPPGTYRVVPSTYLPDTEGAFTVTIATRIDRSPSWQ.

Residues 13–321 (LFRDAAFPAA…FDEITIGYPI (309 aa)) enclose the Calpain catalytic domain. Residues cysteine 73, histidine 238, and asparagine 263 contribute to the active site. 2 domain III regions span residues 322-494 (TEAG…VSLS) and 513-653 (EWGT…PSWQ).

Belongs to the peptidase C2 family.

Its function is as follows. Calcium-regulated non-lysosomal thiol-protease which catalyzes limited proteolysis of substrates involved in cytoskeletal remodeling and signal transduction. May play a role in insulin-stimulated glucose uptake. This is Calpain-10 (CAPN10) from Macaca fascicularis (Crab-eating macaque).